Reading from the N-terminus, the 1057-residue chain is Carbamoyl phosphate synthase large chain (1057 aa).

The segment at 1 to 401 is carboxyphosphate synthetic domain; sequence MPKNKDINTI…SLLKAIRSLE (401 aa). Positions 129, 169, 175, 176, 208, 210, 215, 241, 242, 243, 284, and 298 each coordinate ATP. Residues 133–327 form the ATP-grasp 1 domain; it reads RSLMNELDVP…IAKLAAKIAV (195 aa). Q284, E298, and N300 together coordinate Mg(2+). Mn(2+)-binding residues include Q284, E298, and N300. The interval 402-546 is oligomerization domain; that stretch reads YGVHHLGLPN…YGTYERDNES (145 aa). The carbamoyl phosphate synthetic domain stretch occupies residues 547–929; sequence VVTDKEKVIV…ALFKGLTASG (383 aa). Residues 671–861 form the ATP-grasp 2 domain; the sequence is EALLNKIDVP…MAQLAMRAIL (191 aa). ATP is bound by residues R707, R746, L748, E752, G777, V778, H779, S780, Q820, and E832. Residues Q820, E832, and N834 each contribute to the Mg(2+) site. Positions 820, 832, and 834 each coordinate Mn(2+). Residues 930–1057 enclose the MGS-like domain; it reads VEVKDHGTVL…ESMSFTMKQM (128 aa). The interval 930-1057 is allosteric domain; sequence VEVKDHGTVL…ESMSFTMKQM (128 aa).

It belongs to the CarB family. Composed of two chains; the small (or glutamine) chain promotes the hydrolysis of glutamine to ammonia, which is used by the large (or ammonia) chain to synthesize carbamoyl phosphate. Tetramer of heterodimers (alpha,beta)4. Requires Mg(2+) as cofactor. Mn(2+) serves as cofactor.

The catalysed reaction is hydrogencarbonate + L-glutamine + 2 ATP + H2O = carbamoyl phosphate + L-glutamate + 2 ADP + phosphate + 2 H(+). It catalyses the reaction hydrogencarbonate + NH4(+) + 2 ATP = carbamoyl phosphate + 2 ADP + phosphate + 2 H(+). The protein operates within amino-acid biosynthesis; L-arginine biosynthesis; carbamoyl phosphate from bicarbonate: step 1/1. It participates in pyrimidine metabolism; UMP biosynthesis via de novo pathway; (S)-dihydroorotate from bicarbonate: step 1/3. Its function is as follows. Large subunit of the glutamine-dependent carbamoyl phosphate synthetase (CPSase). CPSase catalyzes the formation of carbamoyl phosphate from the ammonia moiety of glutamine, carbonate, and phosphate donated by ATP, constituting the first step of 2 biosynthetic pathways, one leading to arginine and/or urea and the other to pyrimidine nucleotides. The large subunit (synthetase) binds the substrates ammonia (free or transferred from glutamine from the small subunit), hydrogencarbonate and ATP and carries out an ATP-coupled ligase reaction, activating hydrogencarbonate by forming carboxy phosphate which reacts with ammonia to form carbamoyl phosphate. This is Carbamoyl phosphate synthase large chain from Staphylococcus carnosus (strain TM300).